The chain runs to 305 residues: Virulence plasmid integrase pGP7-D (305 aa).

A Core-binding (CB) domain is found at 13–99 (LTFGEASEIW…CYISFTKFLY (87 aa)). The Tyr recombinase domain maps to 127 to 303 (VKTVSISKKE…GNSSVANIPT (177 aa)). Active-site residues include Lys188 and Arg257. The active-site O-(3'-phospho-DNA)-tyrosine intermediate is the Tyr289.

Belongs to the 'phage' integrase family.

This chain is Virulence plasmid integrase pGP7-D, found in Chlamydia muridarum (strain MoPn / Nigg).